Consider the following 512-residue polypeptide: Cytochrome P450 monooxygenase paxQ (512 aa).

The next 2 helical transmembrane spans lie at F3–I23 and L35–L55. C453 contributes to the heme binding site.

It belongs to the cytochrome P450 family. Requires heme as cofactor.

The protein resides in the membrane. Its pathway is secondary metabolite biosynthesis. Functionally, cytochrome P450 monooxygenase; part of the gene cluster that mediates the biosynthesis of paxilline, a mycotoxin that acts as an inhibitor of mammalian maxi-K channels. PaxG, the geranylgeranyl diphosphate (GGPP) synthase is proposed to catalyze the first step in paxilline biosynthesis. Condensation of indole-3-glycerol phosphate with GGPP by paxC then forms 3-geranylgeranylindole (3-GGI), followed by epoxidation and cyclization of this intermediate (by paxM and paxB) to form paspaline. Paspaline is subsequently converted to 13-desoxypaxilline by paxP, the latter being then converted to paxilline by paxQ. Finally paxilline can be mono- and di-prenylated by paxD. PaxQ can also utilized beta-paxitriol and alpha-PC-M6 as substrates converting them to alpha-paxitriol. This Penicillium paxilli protein is Cytochrome P450 monooxygenase paxQ.